Reading from the N-terminus, the 458-residue chain is NADH-ubiquinone oxidoreductase chain 4 (458 aa).

The next 12 membrane-spanning stretches (helical) occupy residues 21–43, 58–78, 93–112, 116–138, 145–165, 196–216, 224–244, 257–277, 285–305, 309–329, 341–361, and 379–399; these read ASLWTNTTTYSLLIATISLQWLN, IDQISAPLLVLSCWLLPLMLL, RTFIVTLTTIQPFIILAFSA, TLFYISFEATLIPTLILITRWGN, AGIYLLFYTLISSLPLLVTIL, GLALLMAFMVKAPLYGLHLWL, PIAGSMLLAALLLKLGGYGIM, LSYPFLALALWGALMTSSICL, LIAYSSVSHMGLVIAASMIQT, FSGAMILMISHGLTSSMLFCL, ILLLTRGLQPLLPLMSVWWLL, and LTIMIALFNWSTPTIILTGLA.

This sequence belongs to the complex I subunit 4 family.

The protein localises to the mitochondrion membrane. It carries out the reaction a ubiquinone + NADH + 5 H(+)(in) = a ubiquinol + NAD(+) + 4 H(+)(out). In terms of biological role, core subunit of the mitochondrial membrane respiratory chain NADH dehydrogenase (Complex I) that is believed to belong to the minimal assembly required for catalysis. Complex I functions in the transfer of electrons from NADH to the respiratory chain. The immediate electron acceptor for the enzyme is believed to be ubiquinone. The chain is NADH-ubiquinone oxidoreductase chain 4 (MT-ND4) from Struthio camelus (Common ostrich).